Consider the following 1289-residue polypeptide: DNA-directed RNA polymerase subunit beta (1289 aa).

This sequence belongs to the RNA polymerase beta chain family. The RNAP catalytic core consists of 2 alpha, 1 beta, 1 beta' and 1 omega subunit. When a sigma factor is associated with the core the holoenzyme is formed, which can initiate transcription.

It carries out the reaction RNA(n) + a ribonucleoside 5'-triphosphate = RNA(n+1) + diphosphate. In terms of biological role, DNA-dependent RNA polymerase catalyzes the transcription of DNA into RNA using the four ribonucleoside triphosphates as substrates. This chain is DNA-directed RNA polymerase subunit beta, found in Methylacidiphilum infernorum (isolate V4) (Methylokorus infernorum (strain V4)).